Here is a 142-residue protein sequence, read N- to C-terminus: Transcription antitermination protein NusB (142 aa).

This sequence belongs to the NusB family.

In terms of biological role, involved in transcription antitermination. Required for transcription of ribosomal RNA (rRNA) genes. Binds specifically to the boxA antiterminator sequence of the ribosomal RNA (rrn) operons. The polypeptide is Transcription antitermination protein NusB (Streptomyces coelicolor (strain ATCC BAA-471 / A3(2) / M145)).